The sequence spans 243 residues: MPSGMFSIDNILAARPRCKESVLLPQNGPVVFSSLGESLYGPADYSGFYNRAVAPTSTLQGVNGSRLGFNNYYYGQLHVQTHLGPSCCGTVQALGTQQCSCVPPATAYDGAGSVLMPPVPHQMLPYMNVGTLSRTELQLLNQLHCRRKRRHRTIFTDEQLEALENLFQETKYPDVGTREQLARRVHLREEKVEVWFKNRRAKWRRQKRSSSEESENAQKWNKSSKNSAEKADEQVKSDLDSDS.

A DNA-binding region (homeobox) is located at residues 148–207 (KRRHRTIFTDEQLEALENLFQETKYPDVGTREQLARRVHLREEKVEVWFKNRRAKWRRQK). The tract at residues 201 to 243 (AKWRRQKRSSSEESENAQKWNKSSKNSAEKADEQVKSDLDSDS) is disordered. Positions 217–226 (AQKWNKSSKN) are enriched in polar residues. Basic and acidic residues predominate over residues 227–243 (SAEKADEQVKSDLDSDS).

Belongs to the paired homeobox family. Bicoid subfamily. In terms of tissue distribution, at the start of gastrulation, it is found in a patch of cells encompassing 60 degrees of arc on the dorsal marginal zone.

Its subcellular location is the nucleus. Functionally, plays a central role in executing Spemann's organizer phenomenon (the dorsal blastopore lip of the early Xenopus laevis gastrula can organize a complete secondary body axis when transplanted to another embryo). The chain is Homeobox protein goosecoid isoform A (gsc-a) from Xenopus laevis (African clawed frog).